Reading from the N-terminus, the 1135-residue chain is Potassium channel subfamily T member 2 (1135 aa).

Topologically, residues 1–63 (MVDLESEVPP…KNQRSSLRIR (63 aa)) are cytoplasmic. The helical transmembrane segment at 64–84 (LFNFSLKLLSCLLYIIRVLLE) threads the bilayer. The Extracellular segment spans residues 85–101 (NPSQGNEWSHIFWVNRS). A glycan (N-linked (GlcNAc...) asparagine) is linked at N99. The helical transmembrane segment at 102 to 122 (LPLWGLQVSVALISLFETILL) threads the bilayer. The Cytoplasmic segment spans residues 123–137 (GYLSYKGNIWEQILR). The chain crosses the membrane as a helical span at residues 138–158 (IPFILEIINAVPFIISIFWPS). At 159–164 (LRNLFV) the chain is on the extracellular side. Residues 165 to 185 (PVFLNCWLAKHALENMINDLH) traverse the membrane as a helical segment. The Cytoplasmic portion of the chain corresponds to 186–198 (RAIQRTQSAMFNQ). Residues 199 to 219 (VLILISTLLCLIFTCICGIQH) form a helical membrane-spanning segment. Topologically, residues 220–228 (LERIGKKLN) are extracellular. The pore-forming intramembrane region spans 229 to 249 (LFDSLYFCIVTFSTVGFGDVT). At 250-256 (PETWSSK) the chain is on the extracellular side. Residues 257-277 (LFVVAMICVALVVLPIQFEQL) traverse the membrane as a helical segment. Topologically, residues 278-1135 (AYLWMERQKS…GQDSREETQL (858 aa)) are cytoplasmic. 2 RCK N-terminal domains span residues 299 to 435 (EKHV…DHVV) and 718 to 858 (NKLI…CYSL). Disordered regions lie at residues 977–1010 (VEEW…HPLL), 1017–1036 (WARR…AEKI), and 1113–1135 (SEPS…ETQL). Positions 1017-1030 (WARRLSRKGPKHSG) are enriched in basic residues. A compositionally biased stretch (polar residues) spans 1118 to 1127 (RNSICNVTGQ).

This sequence belongs to the potassium channel family. Calcium-activated (TC 1.A.1.3) subfamily. KCa4.2/KCNT2 sub-subfamily. As to quaternary structure, homotetramer. Forms heteromeric channels with KCNT1; these heterodimer channels differ from the homomers in their unitary conductance, kinetic behavior, subcellular localization, and response to activation of protein kinase C. In terms of processing, phosphorylated by protein kinase C. Phosphorylation of the C-terminal domain inhibits channel activity.

It localises to the cell membrane. The catalysed reaction is K(+)(in) = K(+)(out). Its activity is regulated as follows. Are normally in a closed state unless activated by an increase in intracellular Na(+) and Cl(-). Inhibited upon stimulation of G-protein coupled receptors, such as CHRM1 and GRM1. There is conflicting data about the effect of ATP on KNCT2 channels activity. Intracellular ATP was initially report to inhibit the channel activity. However, others studies conclude that KNCT2 channels are not inhibited by intracellular ATP. Sodium-activated and chloride-activated potassium channel. Produces rapidly activating outward rectifier K(+) currents. Contributes to regulate neuronal excitability. The sequence is that of Potassium channel subfamily T member 2 (KCNT2) from Homo sapiens (Human).